We begin with the raw amino-acid sequence, 185 residues long: Kappa-casein (185 aa).

Residues 1 to 20 (MKSFFLVVNILALTLPFLGA) form the signal peptide. An O-linked (GalNAc...) threonine glycan is attached at Thr143. Ser161 is subject to Phosphoserine; alternate. O-linked (GalNAc...) serine; alternate glycosylation occurs at Ser161. A glycan (O-linked (GalNAc...) threonine) is linked at Thr178. A Phosphoserine modification is found at Ser179.

It belongs to the kappa-casein family. Mammary gland specific. Secreted in milk.

It localises to the secreted. In terms of biological role, kappa-casein stabilizes micelle formation, preventing casein precipitation in milk. This Equus caballus (Horse) protein is Kappa-casein (CSN3).